We begin with the raw amino-acid sequence, 117 residues long: Ribonuclease P protein component (117 aa).

The protein belongs to the RnpA family. In terms of assembly, consists of a catalytic RNA component (M1 or rnpB) and a protein subunit.

The catalysed reaction is Endonucleolytic cleavage of RNA, removing 5'-extranucleotides from tRNA precursor.. In terms of biological role, RNaseP catalyzes the removal of the 5'-leader sequence from pre-tRNA to produce the mature 5'-terminus. It can also cleave other RNA substrates such as 4.5S RNA. The protein component plays an auxiliary but essential role in vivo by binding to the 5'-leader sequence and broadening the substrate specificity of the ribozyme. In Nocardioides sp. (strain ATCC BAA-499 / JS614), this protein is Ribonuclease P protein component.